Consider the following 374-residue polypeptide: Chaperone protein DnaJ (374 aa).

The J domain maps to D5–G70. A CR-type zinc finger spans residues G133–Y211. Positions 146, 149, 163, 166, 185, 188, 199, and 202 each coordinate Zn(2+). 4 CXXCXGXG motif repeats span residues C146 to G153, C163 to G170, C185 to G192, and C199 to G206.

The protein belongs to the DnaJ family. As to quaternary structure, homodimer. Requires Zn(2+) as cofactor.

Its subcellular location is the cytoplasm. In terms of biological role, participates actively in the response to hyperosmotic and heat shock by preventing the aggregation of stress-denatured proteins and by disaggregating proteins, also in an autonomous, DnaK-independent fashion. Unfolded proteins bind initially to DnaJ; upon interaction with the DnaJ-bound protein, DnaK hydrolyzes its bound ATP, resulting in the formation of a stable complex. GrpE releases ADP from DnaK; ATP binding to DnaK triggers the release of the substrate protein, thus completing the reaction cycle. Several rounds of ATP-dependent interactions between DnaJ, DnaK and GrpE are required for fully efficient folding. Also involved, together with DnaK and GrpE, in the DNA replication of plasmids through activation of initiation proteins. In Pseudomonas putida (strain ATCC 700007 / DSM 6899 / JCM 31910 / BCRC 17059 / LMG 24140 / F1), this protein is Chaperone protein DnaJ.